The chain runs to 478 residues: tRNA modification GTPase MnmE (478 aa).

Residues Arg25, Glu82, and Lys135 each contribute to the (6S)-5-formyl-5,6,7,8-tetrahydrofolate site. Residues Gly231–Gly400 form the TrmE-type G domain. A K(+)-binding site is contributed by Asn241. GTP-binding positions include Asn241–Ser246, Thr260–Thr266, and Asp285–Gly288. Ser245 lines the Mg(2+) pocket. 3 residues coordinate K(+): Thr260, Val262, and Thr265. A Mg(2+)-binding site is contributed by Thr266. (6S)-5-formyl-5,6,7,8-tetrahydrofolate is bound at residue Lys478.

The protein belongs to the TRAFAC class TrmE-Era-EngA-EngB-Septin-like GTPase superfamily. TrmE GTPase family. Homodimer. Heterotetramer of two MnmE and two MnmG subunits. Requires K(+) as cofactor.

The protein localises to the cytoplasm. Exhibits a very high intrinsic GTPase hydrolysis rate. Involved in the addition of a carboxymethylaminomethyl (cmnm) group at the wobble position (U34) of certain tRNAs, forming tRNA-cmnm(5)s(2)U34. The sequence is that of tRNA modification GTPase MnmE from Polaromonas naphthalenivorans (strain CJ2).